A 2968-amino-acid polypeptide reads, in one-letter code: MNNNKSINDLSGNSNNNIANSNINNYNNLIKKEPIAIIGIGCRFPGNVSNYSDFVNIIKNGSDCLTKIPDDRWNADIISRKQWKLNNRIGGYLKNIDQFDNQFFGISPKEAQHIDPQQRLLLHLAIETLEDGKISLDEIKGKKVGVFIGSSSGDYLRGFDSSEINQFTTPGTNSSFLSNRLSYFLDVNGPSMTVNTACSASMVAIHLGLQSLWNGESELSMVGGVNIISSPLQSLDFGKAGLLNQETDGRCYSFDPRASGYVRSEGGGILLLKPLSAALRDNDEIYSLLLNSANNSNGKTPTGITSPRSLCQEKLIQQLLRESSDQFSIDDIGYFECHGTGTQMGDLNEITAIGKSIGMLKSHDDPLIIGSVKASIGHLEGASGICGVIKSIICLKEKILPQQCKFSSYNPKIPFETLNLKVLTKTQPWNNSKRICGVNSFGVGGSNSSLFLSSFDKSTTITEPTTTTTIESLPSSSSSFDNLSVSSSISTNNDNDKVSNIVNNRYGSSIDVITLSVTSPDKEDLKIRANDVLESIKTLDDNFKIRDISNLTNIRTSHFSNRVAIIGDSIDSIKLNLQSFIKGENNNNKSIILPLINNGNNNNNNNNNSSGSSSSSSNNNNICFIFSGQGQQWNKMIFDLYENNKTFKNEMNNFSKQFEMISGWSIIDKLYNSGGGGNEELINETWLAQPSIVAVQYSLIKLFSKDIGIEGSIVLGHSLGELMAAYYCGIINDFNDLLKLLYIRSTLQNKTNGSGRMHVCLSSKAEIEQLISQLGFNGRIVICGNNTMKSCTISGDNESMNQFTKLISSQQYGSVVHKEVRTNSAFHSHQMDIIKDEFFKLFNQYFPTNQISTNQIYDGKSFYSTCYGKYLTPIECKQLLSSPNYWWKNIRESVLFKESIEQILQNHQQSLTFIEITCHPILNYFLSQLLKSSSKSNTLLLSTLSKNSNSIDQLLILCSKLYVNNLSSIKWNWFYDKQQQQQSESLVSSNFKLPGRRWKLEKYWIENCQRQMDRIKPPMFISLDRKLFSVTPSFEVRLNQDRFQYLNDHQIQDIPLVPFSFYIELVYASIFNSISTTTTNTTASTMFEIENFTIDSSIIIDQKKSTLIGINFNSDLTKFEIGSINSIGSGSSSNNNFIENKWKIHSNGIIKYGTNYLKSNSKSNSFNESTTTTTTTTTTTKCFKSFNSNEFYNEIIKYNYNYKSTFQCVKEFKQFDKQGTFYYSEIQFKKNDKQVIDQLLSKQLPSDFRCIHPCLLDAVLQSAIIPATNKTNCSWIPIKIGKLSVNIPSNSYFNFKDQLLYCLIKPSTSTSTSPSTYFSSDIQVFDKKNNNLICELTNLEFKGINSSSSSSSSSSTINSNVEANYESKIEETNHDEDEDEELPLVSEYVWCKEELINQSIKFTDNYQTVIFCSTNLNGNDLLDSIITSALENGHDENKIFIVSPPPVESDQYNNRIIINYTNNESDFDALFAIINSTTSISGKSGLFSTRFIILPNFNSITFSSGNSTPLITNVNGNGNGKSCGGGGGSTNNTISNSSSSISSIDNGNNEDEEMVLKSFNDSNLSLFHLQKSIIKNNIKGRLFLITNGGQSISSSTPTSTYNDQSYVNLSQYQLIGQIRVFSNEYPIMECSMIDIQDSTRIDLITDQLNSTKLSKLEIAFRDNIGYSYKLLKPSIFDNSSLPSSSSEIETTATTKDEEKNNSINYNNNYYRVELSDNGIISDLKIKQFRQMKCGVGQVLVRVEMCTLNFRDILKSLGRDYDPIHLNSMGDEFSGKVIEIGEGVNNLSVGQYVFGINMSKSMGSFVCCNSDLVFPIPIPTPSSSSSSNENIDDQEIISKLLNQYCTIPIVFLTSWYSIVIQGRLKKGEKILIHSGCGGVGLATIQISMMIGAEIHVTVGSNEKKQYLIKEFGIDEKRIYSSRSLQFYNDLMVNTDGQGVDMVLNSLSGEYLEKSIQCLSQYGRFIEIGKKDIYSNSSIHLEPFKNNLSFFAVDIAQMTENRRDYLREIMIDQLLPCFKNGSLKPLNQHCFNSPCDLVKAIRFMSSGNHIGKILINWSNLNNDKQFINHHSVVHLPIQSFSNRSTYIFTGFGGLTQTLLKYFSTESDLTNVIIVSKNGLDDNSGSGSGNNEKLKLINQLKESGLNVLVEKCDLSSIKQVYKLFNKIFDNDASGSDSGDFSDIKGIFHFASLINDKRILKHNLESFNYVYNSKATSAWNLHQVSLKYNLNLDHFQTIGSVITILGNIGQSNYTCANRFVEGLTHLRIGMGLKSSCIHLASIPDVGMASNDNVLNDLNSMGFVPFQSLNEMNLGFKKLLSSPNPIVVLGEINVDRFIEATPNFRAKDNFIITSLFNRIDPLLLVNESQDFIINNNINNNGGGGDGSFDDLNQLEDEGQQGFGNGDGYVDDNIDSVSMLSGTSSIFDNDFYTKSIRGMLCDILELKDKDLNNTVSFSDYGLDSLLSSELSNTIQKNFSILIPSLTLVDNSTINSTVELIKNKLKNSTTSSISSSVSKKVSFKKNTQPLIIPTTAPISIIKTQSYIKSEIIESLPISSSTTIKPLVFDNLVYSSSSSNNSNSKNELTSPPPSAKRESVLPIISEDNNSDNDSSMATVIYEISPIAAPYHRYQTDVLKEITQLTPHKEFIDNIYKKSKIRSRYCFNDFSEKSMADINKLDAGERVALFREQTYQTVINAGKTVIERAGIDPMLISHVVGVTSTGIMAPSFDVVLIDKLGLSINTSRTMINFMGCGAAVNSMRAATAYAKLKPGTFVLVVAVEASATCMKFNFDSRSDLLSQAIFTDGCVATLVTCQPKSSLVGKLEIIDDLSYLMPDSRDALNLFIGPTGIDLDLRPELPIAINRHINSAITSWLKKNSLQKSDIEFFATHPGGAKIISAVHEGLGLSPEDLSDSYEVMKRYGNMIGVSTYYVLRRILDKNQTLLQEGSLGYNYGMAMAFSPGASIEAILFKLIK.

Positions 32–454 (KEPIAIIGIG…GSNSSLFLSS (423 aa)) constitute a Ketosynthase family 3 (KS3) domain. Residues Cys-198, His-338, and His-378 each act as for beta-ketoacyl synthase activity in the active site. The interval 624 to 950 (FIFSGQGQQW…LSTLSKNSNS (327 aa)) is malonyl-CoA:ACP transacylase (MAT) domain. Ser-718 acts as the For malonyltransferase activity in catalysis. Positions 1017–1157 (PPMFISLDRK…GIIKYGTNYL (141 aa)) are N-terminal hotdog fold. Residues 1017–1350 (PPMFISLDRK…FKGINSSSSS (334 aa)) enclose the PKS/mFAS DH domain. A dehydratase (DH) domain region spans residues 1031–1345 (TPSFEVRLNQ…LTNLEFKGIN (315 aa)). His-1049 serves as the catalytic Proton acceptor; for dehydratase activity. The segment at 1183 to 1350 (FKSFNSNEFY…FKGINSSSSS (168 aa)) is C-terminal hotdog fold. The active-site Proton donor; for dehydratase activity is the Asp-1257. Residues 1522 to 1547 (SCGGGGGSTNNTISNSSSSISSIDNG) form a disordered region. The span at 1530 to 1547 (TNNTISNSSSSISSIDNG) shows a compositional bias: low complexity. An enoyl reductase (ER) domain region spans residues 1718 to 2053 (GIISDLKIKQ…SGNHIGKILI (336 aa)). A ketoreductase (KR) domain region spans residues 2083 to 2277 (TYIFTGFGGL…LKSSCIHLAS (195 aa)). Residues 2379–2400 (GDGSFDDLNQLEDEGQQGFGNG) form a disordered region. One can recognise a Carrier domain in the interval 2421 to 2498 (FDNDFYTKSI…STVELIKNKL (78 aa)). Ser-2458 bears the O-(pantetheine 4'-phosphoryl)serine mark. A disordered region spans residues 2568–2589 (SSSSNNSNSKNELTSPPPSAKR). Residues 2707 to 2968 (ISHVVGVTST…IEAILFKLIK (262 aa)) form a chalcone synthase region. Residue Cys-2747 is part of the active site.

Requires pantetheine 4'-phosphate as cofactor.

It catalyses the reaction (E)-4-coumaroyl-CoA + 3 malonyl-CoA + 3 H(+) = 2',4,4',6'-tetrahydroxychalcone + 3 CO2 + 4 CoA. It carries out the reaction hexanoyl-CoA + 3 malonyl-CoA + 3 H(+) = 2,4,6-trihydroxyphenylhexan-1-one + 3 CO2 + 4 CoA. It functions in the pathway secondary metabolite biosynthesis; flavonoid biosynthesis. Its function is as follows. Polyketide synthase; part of the gene cluster that mediates the biosynthesis of DIF-1 (Differentiation Inducing Factor-1), a signal molecule involved in the differentiation of pstO (prestalk-O) cells. The three-step process begins with the formation of (2,4,6-trihydroxyphenyl)-1-hexan-1-one (THPH) by the polyketide synthase StlB. THPH is then dichlorinated by the flavin-dependent halogenase ChlA. The last step of DIF-1 biosynthesis is the O-methylation of dichloro-THPH (or des-methyl-DIF-1) by the methyltransferase DmtA to yield DIF-1. The protein is Polyketide synthase 37 (StlB) of Dictyostelium discoideum (Social amoeba).